Here is a 597-residue protein sequence, read N- to C-terminus: Probable HECT-type ubiquitin ligase-interacting protein creD (597 aa).

Disordered stretches follow at residues 375 to 398 (ELDP…GTLS) and 432 to 499 (LNIT…MATP). Over residues 443–455 (TDHESQNDSEHRR) the composition is skewed to basic and acidic residues. The segment covering 465–481 (PSSGSNSHSPSSPVLSR) has biased composition (low complexity). The span at 482–492 (RPSDEVDHEHV) shows a compositional bias: basic and acidic residues.

This sequence belongs to the arrestin family. As to quaternary structure, interacts with hulA.

Functionally, component of the regulatory network controlling carbon source utilization through ubiquitination and deubiquitination involving creA, creB, creC, creD and acrB. May be involved in signaling by recognizing appropriately phosphorylated substrates via its arrestin domains and then recruit a HECT-type ubiquitin ligase such as hulA, leading to ubiquitination of the substrate, providing a link between ubiquitination and phosphorylation in protein regulation and stability. This Aspergillus oryzae (strain ATCC 42149 / RIB 40) (Yellow koji mold) protein is Probable HECT-type ubiquitin ligase-interacting protein creD (creD).